Here is a 150-residue protein sequence, read N- to C-terminus: Large ribosomal subunit protein bL9 (150 aa).

This sequence belongs to the bacterial ribosomal protein bL9 family.

In terms of biological role, binds to the 23S rRNA. This chain is Large ribosomal subunit protein bL9, found in Shewanella baltica (strain OS155 / ATCC BAA-1091).